The chain runs to 244 residues: Mediator of RNA polymerase II transcription subunit 19 (244 aa).

Disordered regions lie at residues 1-67 (MENF…PFYL) and 171-244 (PKKK…SSLR). A compositionally biased stretch (pro residues) spans 26 to 38 (GKPPPPPPPPPGG). A compositionally biased stretch (low complexity) spans 44-55 (PPSTATSAPAGA). The span at 171–182 (PKKKNKHKHKQS) shows a compositional bias: basic residues. Ser194 carries the post-translational modification Phosphoserine. Residues 212 to 224 (KRKKKEKKKKKNR) show a composition bias toward basic residues. A Phosphoserine modification is found at Ser226. Low complexity predominate over residues 234–244 (SSQASSSSSLR).

It belongs to the Mediator complex subunit 19 family. As to quaternary structure, component of the Mediator complex, which is composed of MED1, MED4, MED6, MED7, MED8, MED9, MED10, MED11, MED12, MED13, MED13L, MED14, MED15, MED16, MED17, MED18, MED19, MED20, MED21, MED22, MED23, MED24, MED25, MED26, MED27, MED29, MED30, MED31, CCNC, CDK8 and CDC2L6/CDK11. The MED12, MED13, CCNC and CDK8 subunits form a distinct module termed the CDK8 module. Mediator containing the CDK8 module is less active than Mediator lacking this module in supporting transcriptional activation. Individual preparations of the Mediator complex lacking one or more distinct subunits have been variously termed ARC, CRSP, DRIP, PC2, SMCC and TRAP.

The protein localises to the nucleus. Functionally, component of the Mediator complex, a coactivator involved in the regulated transcription of nearly all RNA polymerase II-dependent genes. Mediator functions as a bridge to convey information from gene-specific regulatory proteins to the basal RNA polymerase II transcription machinery. Mediator is recruited to promoters by direct interactions with regulatory proteins and serves as a scaffold for the assembly of a functional preinitiation complex with RNA polymerase II and the general transcription factors. The sequence is that of Mediator of RNA polymerase II transcription subunit 19 (Med19) from Mus musculus (Mouse).